The following is a 243-amino-acid chain: Small ribosomal subunit protein mS23 (243 aa).

This sequence belongs to the mitochondrion-specific ribosomal protein mS23 family. In terms of assembly, component of the mitochondrial small ribosomal subunit.

The protein localises to the mitochondrion. The sequence is that of Small ribosomal subunit protein mS23 (rsm25) from Emericella nidulans (strain FGSC A4 / ATCC 38163 / CBS 112.46 / NRRL 194 / M139) (Aspergillus nidulans).